Consider the following 599-residue polypeptide: Sulfite reductase [NADPH] flavoprotein alpha-component (599 aa).

Positions 64–202 (ITIISASQTG…AASEWRARVV (139 aa)) constitute a Flavodoxin-like domain. Residues 70 to 75 (SQTGNA), 117 to 120 (STQG), and 153 to 162 (LGDSSYEFFC) contribute to the FMN site. The FAD-binding FR-type domain occupies 234–448 (DAPLVASLSV…IEHNDNFRLP (215 aa)). FAD contacts are provided by residues threonine 322, alanine 356, 386–389 (RLYS), 404–406 (TVG), tyrosine 410, and 419–422 (GGAS). NADP(+) contacts are provided by residues 519–520 (SR), 525–529 (KVYVQ), and aspartate 561. Tyrosine 599 lines the FAD pocket.

This sequence belongs to the NADPH-dependent sulphite reductase flavoprotein subunit CysJ family. The protein in the N-terminal section; belongs to the flavodoxin family. In the C-terminal section; belongs to the flavoprotein pyridine nucleotide cytochrome reductase family. As to quaternary structure, alpha(8)-beta(8). The alpha component is a flavoprotein, the beta component is a hemoprotein. FAD serves as cofactor. Requires FMN as cofactor.

The catalysed reaction is hydrogen sulfide + 3 NADP(+) + 3 H2O = sulfite + 3 NADPH + 4 H(+). Its pathway is sulfur metabolism; hydrogen sulfide biosynthesis; hydrogen sulfide from sulfite (NADPH route): step 1/1. Its function is as follows. Component of the sulfite reductase complex that catalyzes the 6-electron reduction of sulfite to sulfide. This is one of several activities required for the biosynthesis of L-cysteine from sulfate. The flavoprotein component catalyzes the electron flow from NADPH -&gt; FAD -&gt; FMN to the hemoprotein component. The sequence is that of Sulfite reductase [NADPH] flavoprotein alpha-component from Escherichia coli (strain ATCC 8739 / DSM 1576 / NBRC 3972 / NCIMB 8545 / WDCM 00012 / Crooks).